The chain runs to 503 residues: Nuclear respiratory factor 1 (503 aa).

The interval 1-78 (MEEHGVTQTE…AHLAAAGPVG (78 aa)) is dimerization. The interval 36 to 57 (SMLSADEDSPSSPEDTSYDDSD) is disordered. A phosphoserine; by CK2 mark is found at Ser-39, Ser-44, Ser-46, Ser-47, and Ser-52. The Nuclear localization signal motif lies at 88–116 (GKKRKRPHVFESNPSIRKRQQTRLLRKLR). The DNA-binding element occupies 109–305 (TRLLRKLRAT…SIAHLVPSQT (197 aa)). A Glycyl lysine isopeptide (Lys-Gly) (interchain with G-Cter in SUMO2) cross-link involves residue Lys-139. Residues 301-476 (VPSQTVVQTF…AQGNGPVQVA (176 aa)) are required for transcriptional activation.

The protein belongs to the NRF1/Ewg family. As to quaternary structure, homodimer. Binds DNA as a dimer. Interacts with PPRC1. Post-translationally, phosphorylation enhances DNA binding. Ubiquitously expressed with strongest expression in skeletal muscle.

Its subcellular location is the nucleus. In terms of biological role, transcription factor that activates the expression of the EIF2S1 (EIF2-alpha) gene. Links the transcriptional modulation of key metabolic genes to cellular growth and development. Implicated in the control of nuclear genes required for respiration, heme biosynthesis, and mitochondrial DNA transcription and replication. The chain is Nuclear respiratory factor 1 (NRF1) from Homo sapiens (Human).